The primary structure comprises 598 residues: Aspartate--tRNA(Asp/Asn) ligase (598 aa).

Glu-174 is a binding site for L-aspartate. The interval 198-201 (QQLK) is aspartate. Arg-220 is an L-aspartate binding site. ATP is bound by residues 220 to 222 (RDE) and Gln-229. Position 458 (His-458) interacts with L-aspartate. Glu-492 contributes to the ATP binding site. Arg-499 is a binding site for L-aspartate. 544–547 (GIDR) provides a ligand contact to ATP.

It belongs to the class-II aminoacyl-tRNA synthetase family. Type 1 subfamily. As to quaternary structure, homodimer.

It is found in the cytoplasm. It carries out the reaction tRNA(Asx) + L-aspartate + ATP = L-aspartyl-tRNA(Asx) + AMP + diphosphate. Aspartyl-tRNA synthetase with relaxed tRNA specificity since it is able to aspartylate not only its cognate tRNA(Asp) but also tRNA(Asn). Reaction proceeds in two steps: L-aspartate is first activated by ATP to form Asp-AMP and then transferred to the acceptor end of tRNA(Asp/Asn). This chain is Aspartate--tRNA(Asp/Asn) ligase, found in Dehalococcoides mccartyi (strain ATCC BAA-2266 / KCTC 15142 / 195) (Dehalococcoides ethenogenes (strain 195)).